Reading from the N-terminus, the 444-residue chain is Enolase 2 (444 aa).

Substrate contacts are provided by H165 and E174. E217 serves as the catalytic Proton donor. Residues D252, E303, and D330 each coordinate Mg(2+). E303 and D330 together coordinate substrate. Residue K355 is the Proton acceptor of the active site. Substrate contacts are provided by residues 382–385 (SHRS) and K406.

This sequence belongs to the enolase family. As to quaternary structure, homodimer. It depends on Mg(2+) as a cofactor.

The protein resides in the cytoplasm. The enzyme catalyses (2R)-2-phosphoglycerate = phosphoenolpyruvate + H2O. Its pathway is carbohydrate degradation; glycolysis; pyruvate from D-glyceraldehyde 3-phosphate: step 4/5. The protein is Enolase 2 (ENO2) of Toxoplasma gondii.